The following is a 277-amino-acid chain: Ribosomal RNA small subunit methyltransferase A (277 aa).

Residues asparagine 26, leucine 28, glycine 53, glutamate 74, aspartate 101, and asparagine 123 each coordinate S-adenosyl-L-methionine.

Belongs to the class I-like SAM-binding methyltransferase superfamily. rRNA adenine N(6)-methyltransferase family. RsmA subfamily.

Its subcellular location is the cytoplasm. The catalysed reaction is adenosine(1518)/adenosine(1519) in 16S rRNA + 4 S-adenosyl-L-methionine = N(6)-dimethyladenosine(1518)/N(6)-dimethyladenosine(1519) in 16S rRNA + 4 S-adenosyl-L-homocysteine + 4 H(+). In terms of biological role, specifically dimethylates two adjacent adenosines (A1518 and A1519) in the loop of a conserved hairpin near the 3'-end of 16S rRNA in the 30S particle. May play a critical role in biogenesis of 30S subunits. The sequence is that of Ribosomal RNA small subunit methyltransferase A from Opitutus terrae (strain DSM 11246 / JCM 15787 / PB90-1).